A 91-amino-acid polypeptide reads, in one-letter code: Small ribosomal subunit protein uS17 (91 aa).

This sequence belongs to the universal ribosomal protein uS17 family. As to quaternary structure, part of the 30S ribosomal subunit.

Its function is as follows. One of the primary rRNA binding proteins, it binds specifically to the 5'-end of 16S ribosomal RNA. This Psychrobacter cryohalolentis (strain ATCC BAA-1226 / DSM 17306 / VKM B-2378 / K5) protein is Small ribosomal subunit protein uS17.